Consider the following 183-residue polypeptide: NEDD8-conjugating enzyme Ubc12 (183 aa).

Residue Met-1 is modified to N-acetylmethionine. Residues 1-28 (MIKLFSLKQQKKEEESAGGTKGSSKKAS) are disordered. A UBC core domain is found at 29–173 (AAQLRIQKDI…VQRSMRGGYI (145 aa)). Catalysis depends on Cys-111, which acts as the Glycyl thioester intermediate.

The protein belongs to the ubiquitin-conjugating enzyme family. UBC12 subfamily. The acetylation of Met-1 increases affinity for DCUN1D1 by about 2 orders of magnitude and is crucial for NEDD8 transfer to cullins.

It catalyses the reaction [E1 NEDD8-activating enzyme]-S-[NEDD8 protein]-yl-L-cysteine + [E2 NEDD8-conjugating enzyme]-L-cysteine = [E1 NEDD8-activating enzyme]-L-cysteine + [E2 NEDD8-conjugating enzyme]-S-[NEDD8-protein]-yl-L-cysteine.. It participates in protein modification; protein neddylation. Its function is as follows. Accepts the ubiquitin-like protein NEDD8 from the UBA3-NAE1 E1 complex and catalyzes its covalent attachment to other proteins. The specific interaction with the E3 ubiquitin ligase rbx1, but not rbx2, suggests that the rbx1-ube2m complex neddylates specific target proteins, such as cul1, cul2, cul3 and cul4. Involved in cell proliferation. The chain is NEDD8-conjugating enzyme Ubc12 (ube2m) from Xenopus laevis (African clawed frog).